The following is a 485-amino-acid chain: Ribulose bisphosphate carboxylase large chain (485 aa).

Positions 1–2 are excised as a propeptide; the sequence is MS. An N-acetylproline modification is found at Pro-3. At Lys-14 the chain carries N6,N6,N6-trimethyllysine. Substrate contacts are provided by Asn-123 and Thr-173. Catalysis depends on Lys-175, which acts as the Proton acceptor. Residue Lys-177 participates in substrate binding. Residues Lys-201, Asp-203, and Glu-204 each contribute to the Mg(2+) site. Lys-201 is modified (N6-carboxylysine). His-294 acts as the Proton acceptor in catalysis. Residues Arg-295, His-327, and Ser-379 each contribute to the substrate site.

This sequence belongs to the RuBisCO large chain family. Type I subfamily. Heterohexadecamer of 8 large chains and 8 small chains; disulfide-linked. The disulfide link is formed within the large subunit homodimers. Requires Mg(2+) as cofactor. Post-translationally, the disulfide bond which can form in the large chain dimeric partners within the hexadecamer appears to be associated with oxidative stress and protein turnover.

Its subcellular location is the plastid. It localises to the chloroplast. The catalysed reaction is 2 (2R)-3-phosphoglycerate + 2 H(+) = D-ribulose 1,5-bisphosphate + CO2 + H2O. It carries out the reaction D-ribulose 1,5-bisphosphate + O2 = 2-phosphoglycolate + (2R)-3-phosphoglycerate + 2 H(+). RuBisCO catalyzes two reactions: the carboxylation of D-ribulose 1,5-bisphosphate, the primary event in carbon dioxide fixation, as well as the oxidative fragmentation of the pentose substrate in the photorespiration process. Both reactions occur simultaneously and in competition at the same active site. The sequence is that of Ribulose bisphosphate carboxylase large chain from Bartlettina sordida (Purple torch).